Here is a 465-residue protein sequence, read N- to C-terminus: MDTPNNRGINIRFVTNKKVLWPEDVAAKLFSQYQTMLATKLYTKDMEIVEILSGTTPFKGVYTLEQIKSKIKNQKHSLSMKNLALQKTSQQIDSSPPQTPTTSNGSMMTRRQNANNAISSNNNTNTNVTNGSSSNTSLNGGDEEQEEEEEEENDEDSITNKEDSDSYDDFSIVEETTDIREVQDTRSFKKVKLNSLTSLNEGYIVPPTPQIEMVSPNRNNNNNNINKNNNNNINNNNNNNNNIFNFLQDQDQNQNKPNKPNNQSNFSNQSQQLQNLINATANENKKLKLSMEQLEFQLKMEKEQNLKLKNLVTKLNEEIQLEKEISKQINKSICSNLNIQNSRSISTNSVIFKKDSNDDSIVAIFPTFITTTNSNSSEITLTIDPNPPENYHKIIIKQQLHQHHQHQQQQQQQQPQIQTYLIKKLQDYYDPEPCLIGSTNSKGVYFKSKDKSLLKISIDNLRDFD.

The span at 87–112 (KTSQQIDSSPPQTPTTSNGSMMTRRQ) shows a compositional bias: polar residues. Disordered stretches follow at residues 87–169 (KTSQ…SYDD) and 201–244 (EGYI…NNIF). Low complexity predominate over residues 113-139 (NANNAISSNNNTNTNVTNGSSSNTSLN). Residues 141–157 (GDEEQEEEEEEENDEDS) show a composition bias toward acidic residues. A compositionally biased stretch (low complexity) spans 217–244 (NRNNNNNNINKNNNNNINNNNNNNNNIF).

This is an uncharacterized protein from Dictyostelium discoideum (Social amoeba).